A 351-amino-acid chain; its full sequence is Histidinol-phosphate aminotransferase (351 aa).

Lys-213 carries the N6-(pyridoxal phosphate)lysine modification.

The protein belongs to the class-II pyridoxal-phosphate-dependent aminotransferase family. Histidinol-phosphate aminotransferase subfamily. As to quaternary structure, homodimer. The cofactor is pyridoxal 5'-phosphate.

It catalyses the reaction L-histidinol phosphate + 2-oxoglutarate = 3-(imidazol-4-yl)-2-oxopropyl phosphate + L-glutamate. It participates in amino-acid biosynthesis; L-histidine biosynthesis; L-histidine from 5-phospho-alpha-D-ribose 1-diphosphate: step 7/9. The sequence is that of Histidinol-phosphate aminotransferase from Thermoanaerobacter pseudethanolicus (strain ATCC 33223 / 39E) (Clostridium thermohydrosulfuricum).